The primary structure comprises 372 residues: Ketol-acid reductoisomerase (NADP(+)) (372 aa).

The disordered stretch occupies residues M1–D25. Residues T10 to D19 show a composition bias toward acidic residues. A KARI N-terminal Rossmann domain is found at L24–T205. Residues Y49–Q52, S75, S77, and D107–Q110 each bind NADP(+). The active site involves H131. G157 lines the NADP(+) pocket. A KARI C-terminal knotted domain is found at T206–S351. Mg(2+) contacts are provided by D214, E218, E250, and E254. Substrate is bound at residue S275. The segment at S351–D372 is disordered. The segment covering D352 to D372 has biased composition (acidic residues).

This sequence belongs to the ketol-acid reductoisomerase family. It depends on Mg(2+) as a cofactor.

It catalyses the reaction (2R)-2,3-dihydroxy-3-methylbutanoate + NADP(+) = (2S)-2-acetolactate + NADPH + H(+). The enzyme catalyses (2R,3R)-2,3-dihydroxy-3-methylpentanoate + NADP(+) = (S)-2-ethyl-2-hydroxy-3-oxobutanoate + NADPH + H(+). It participates in amino-acid biosynthesis; L-isoleucine biosynthesis; L-isoleucine from 2-oxobutanoate: step 2/4. The protein operates within amino-acid biosynthesis; L-valine biosynthesis; L-valine from pyruvate: step 2/4. Functionally, involved in the biosynthesis of branched-chain amino acids (BCAA). Catalyzes an alkyl-migration followed by a ketol-acid reduction of (S)-2-acetolactate (S2AL) to yield (R)-2,3-dihydroxy-isovalerate. In the isomerase reaction, S2AL is rearranged via a Mg-dependent methyl migration to produce 3-hydroxy-3-methyl-2-ketobutyrate (HMKB). In the reductase reaction, this 2-ketoacid undergoes a metal-dependent reduction by NADPH to yield (R)-2,3-dihydroxy-isovalerate. The protein is Ketol-acid reductoisomerase (NADP(+)) of Haloquadratum walsbyi (strain DSM 16790 / HBSQ001).